Reading from the N-terminus, the 718-residue chain is Auxin response factor 2 (718 aa).

The interval 1–24 (MVGIDLNTVEEEEDEEEGGATGTV) is disordered. Acidic residues predominate over residues 8–18 (TVEEEEDEEEG). The segment at residues 147 to 249 (FCKTLTASDT…ELRLGVRRAA (103 aa)) is a DNA-binding region (TF-B3).

Belongs to the ARF family. Homo and heterodimers. Expressed in roots, culms, leaves and young panicles.

It is found in the nucleus. Functionally, auxin response factors (ARFs) are transcriptional factors that bind specifically to the DNA sequence 5'-TGTCTC-3' found in the auxin-responsive promoter elements (AuxREs). The protein is Auxin response factor 2 (ARF2) of Oryza sativa subsp. japonica (Rice).